The following is a 1340-amino-acid chain: Early transcription factor large subunit homolog (1340 aa).

The protein localises to the virion. Functionally, putative initation factor. This chain is Early transcription factor large subunit homolog, found in Ornithodoros (relapsing fever ticks).